Here is a 796-residue protein sequence, read N- to C-terminus: Serine/threonine-protein kinase ATG1 (796 aa).

Positions 9–304 constitute a Protein kinase domain; the sequence is YVVGAEIGRG…FQEFFNDPVI (296 aa). ATP-binding positions include 15–23 and K38; that span reads IGRGSFANV. D155 serves as the catalytic Proton acceptor. The span at 360–370 shows a compositional bias: acidic residues; it reads LEEEDEEEDQD. 3 disordered regions span residues 360–382, 389–408, and 450–480; these read LEEEDEEEDQDQLPSKNDNIQHM, LLNKTTQKQTEVQSQPRREL, and PYTRRYSSSSRSSSTGSNQRRPSFGDRKVPI. Positions 389 to 403 are enriched in polar residues; sequence LLNKTTQKQTEVQSQ. Over residues 453-470 the composition is skewed to low complexity; the sequence is RRYSSSSRSSSTGSNQRR.

This sequence belongs to the protein kinase superfamily. Ser/Thr protein kinase family. APG1/unc-51/ULK1 subfamily. As to quaternary structure, homodimer. Forms a ternary complex with ATG13 and ATG17.

The protein resides in the cytoplasm. The protein localises to the preautophagosomal structure membrane. It catalyses the reaction L-seryl-[protein] + ATP = O-phospho-L-seryl-[protein] + ADP + H(+). It carries out the reaction L-threonyl-[protein] + ATP = O-phospho-L-threonyl-[protein] + ADP + H(+). Serine/threonine protein kinase involved in the cytoplasm to vacuole transport (Cvt) and found to be essential in autophagy, where it is required for the formation of autophagosomes. Involved in the clearance of protein aggregates which cannot be efficiently cleared by the proteasome. Required for selective autophagic degradation of the nucleus (nucleophagy) as well as for mitophagy which contributes to regulate mitochondrial quantity and quality by eliminating the mitochondria to a basal level to fulfill cellular energy requirements and preventing excess ROS production. Also involved in endoplasmic reticulum-specific autophagic process, in selective removal of ER-associated degradation (ERAD) substrates. Plays a key role in ATG9 and ATG23 cycling through the pre-autophagosomal structure and is necessary to promote ATG18 binding to ATG9 through phosphorylation of ATG9. Catalyzes phosphorylation of ATG4, decreasing the interaction between ATG4 and ATG8 and impairing deconjugation of PE-conjugated forms of ATG8. The chain is Serine/threonine-protein kinase ATG1 from Komagataella pastoris (Yeast).